A 614-amino-acid polypeptide reads, in one-letter code: High-affinity choline transporter 1 (614 aa).

Residues 6-26 (GVVSIVLFYLLILVVGIWAGR) form a helical membrane-spanning segment. Residues 27–44 (KKQSGNDSEEEVMLAGRS) lie on the Cytoplasmic side of the membrane. The helical transmembrane segment at 45 to 65 (IGLFVGIFTMTATWVGGGYIN) threads the bilayer. The Extracellular segment spans residues 66–75 (GTAEAIYTSG). A helical membrane pass occupies residues 76–96 (LVWCQAPFGYALSLVFGGIFF). The Cytoplasmic segment spans residues 97-119 (ANPMRKQGYITMLDPLQDSFGER). The helical transmembrane segment at 120–140 (MGGLLFLPALCGEVFWAAGIL) threads the bilayer. The Extracellular portion of the chain corresponds to 141-158 (AALGATLSVIIDMDHRTS). A helical transmembrane segment spans residues 159-179 (VILSSCIAIFYTLFGGLYSVA). Residues 180–185 (YTDVIQ) lie on the Cytoplasmic side of the membrane. The chain crosses the membrane as a helical span at residues 186 to 206 (LFCIFIGLWMCIPFAWSNEHV). Over 207-225 (GSLSDLEVDWIGHVEPKKH) the chain is Extracellular. Residues 226–246 (WLYIDYGLLLVFGGIPWQVYF) form a helical membrane-spanning segment. The Cytoplasmic portion of the chain corresponds to 247 to 262 (QRVLSSKTAGRAQLLS). The chain crosses the membrane as a helical span at residues 263–283 (YVAAAGCILMAIPPVLIGAIA). The Extracellular segment spans residues 284–305 (KATPWNETDYKGPYPLTVDETS). Residue asparagine 289 is glycosylated (N-linked (GlcNAc...) asparagine). The chain crosses the membrane as a helical span at residues 306–326 (MILPMVLQYLTPDFVSFFGLG). The Cytoplasmic segment spans residues 327–364 (AVSAAVMSSADSSVLSAASMFARNVYKLIFRQKASEME). A helical membrane pass occupies residues 365 to 385 (IIWVMRVAIIVVGILATIMAL). At 386–394 (TIPSIYGLW) the chain is on the extracellular side. The helical transmembrane segment at 395–415 (SMCSDLVYVILFPQLLMVVHF) threads the bilayer. At 416–424 (KKHCNTYGS) the chain is on the cytoplasmic side. Residues 425–445 (LSAYIVALAIRLSGGEAILGL) form a helical membrane-spanning segment. The Extracellular segment spans residues 446 to 467 (APLIKYPGYDEETKEQMFPFRT). The helical transmembrane segment at 468–488 (MAMLLSLVTLISVSWWTKMMF) threads the bilayer. The Cytoplasmic portion of the chain corresponds to 489–614 (ESGKLPPSYD…PTAEQDNTAF (126 aa)). The segment at 583-614 (ATGVKPSGGGGGHLQSQSGMAMPTAEQDNTAF) is disordered.

Belongs to the sodium:solute symporter (SSF) (TC 2.A.21) family.

The protein resides in the membrane. Imports choline from the extracellular space to the neuron with high affinity. Rate-limiting step in acetylcholine synthesis. Sodium ion and chloride ion dependent. This chain is High-affinity choline transporter 1, found in Drosophila melanogaster (Fruit fly).